The chain runs to 478 residues: ATP-dependent RNA helicase DDX19A (478 aa).

Residue A2 is modified to N-acetylalanine. The segment at 2–299 (ATDSWALAVD…DPNVIKLKRE (298 aa)) is N-terminal lobe. A Glycyl lysine isopeptide (Lys-Gly) (interchain with G-Cter in SUMO1); alternate cross-link involves residue K26. Residue K26 forms a Glycyl lysine isopeptide (Lys-Gly) (interchain with G-Cter in SUMO2); alternate linkage. T42 carries the phosphothreonine modification. An N-terminal helix region spans residues 54-67 (DRAAQSLLNKLIRS). The Q motif signature appears at 91–119 (KSFEELRLKPQLLQGVYAMGFNRPSKIQE). Residues Q118 and 137–144 (SQSGTGKT) contribute to the ATP site. In terms of domain architecture, Helicase ATP-binding spans 124 to 294 (MMLAEPPQNL…QKVVPDPNVI (171 aa)). Residues 241–244 (DEAD) carry the DEAD box motif. A C-terminal lobe region spans residues 300–478 (EETLDTIKQY…DLDEIEKIAN (179 aa)). Residues 305-473 (TIKQYYVLCS…RLDTDDLDEI (169 aa)) form the Helicase C-terminal domain. ATP-binding residues include R428 and R431.

Belongs to the DEAD box helicase family. DDX19/DBP5 subfamily.

Its subcellular location is the cytoplasm. It is found in the nucleus. It localises to the nucleoplasm. The catalysed reaction is ATP + H2O = ADP + phosphate + H(+). Functionally, ATP-dependent RNA helicase involved in mRNA export from the nucleus. Rather than unwinding RNA duplexes, DDX19 functions as a remodeler of ribonucleoprotein particles, whereby proteins bound to nuclear mRNA are dissociated and replaced by cytoplasmic mRNA binding proteins. In Homo sapiens (Human), this protein is ATP-dependent RNA helicase DDX19A (DDX19A).